The chain runs to 260 residues: Isoprenyl transferase (260 aa).

The active site involves D40. D40 contacts Mg(2+). Residues 41-44, W45, R53, H57, and 85-87 each bind substrate; these read GNGR and STE. N88 serves as the catalytic Proton acceptor. Substrate contacts are provided by residues W89, R91, R208, and 214-216; that span reads RLS. E227 is a Mg(2+) binding site.

This sequence belongs to the UPP synthase family. In terms of assembly, homodimer. The cofactor is Mg(2+).

Functionally, catalyzes the condensation of isopentenyl diphosphate (IPP) with allylic pyrophosphates generating different type of terpenoids. The chain is Isoprenyl transferase from Bacillus subtilis (strain 168).